A 340-amino-acid chain; its full sequence is Ketol-acid reductoisomerase (NADP(+)) (340 aa).

The region spanning 3-183 (LSVYYDKDCN…GGGRTGIIET (181 aa)) is the KARI N-terminal Rossmann domain. NADP(+) contacts are provided by residues 26–29 (FGSQ), Ser-54, and 84–87 (DELQ). Residue His-109 is part of the active site. Gly-135 provides a ligand contact to NADP(+). Residues 184–329 (TFKDETETDL…ERLRAMMPWI (146 aa)) enclose the KARI C-terminal knotted domain. Residues Asp-192, Glu-196, Glu-228, and Glu-232 each contribute to the Mg(2+) site. Ser-253 is a substrate binding site.

Belongs to the ketol-acid reductoisomerase family. Mg(2+) serves as cofactor.

It catalyses the reaction (2R)-2,3-dihydroxy-3-methylbutanoate + NADP(+) = (2S)-2-acetolactate + NADPH + H(+). It carries out the reaction (2R,3R)-2,3-dihydroxy-3-methylpentanoate + NADP(+) = (S)-2-ethyl-2-hydroxy-3-oxobutanoate + NADPH + H(+). Its pathway is amino-acid biosynthesis; L-isoleucine biosynthesis; L-isoleucine from 2-oxobutanoate: step 2/4. It functions in the pathway amino-acid biosynthesis; L-valine biosynthesis; L-valine from pyruvate: step 2/4. Its function is as follows. Involved in the biosynthesis of branched-chain amino acids (BCAA). Catalyzes an alkyl-migration followed by a ketol-acid reduction of (S)-2-acetolactate (S2AL) to yield (R)-2,3-dihydroxy-isovalerate. In the isomerase reaction, S2AL is rearranged via a Mg-dependent methyl migration to produce 3-hydroxy-3-methyl-2-ketobutyrate (HMKB). In the reductase reaction, this 2-ketoacid undergoes a metal-dependent reduction by NADPH to yield (R)-2,3-dihydroxy-isovalerate. The protein is Ketol-acid reductoisomerase (NADP(+)) of Wolinella succinogenes (strain ATCC 29543 / DSM 1740 / CCUG 13145 / JCM 31913 / LMG 7466 / NCTC 11488 / FDC 602W) (Vibrio succinogenes).